Reading from the N-terminus, the 572-residue chain is Arginine--tRNA ligase (572 aa).

Positions 122–132 (PNLAKEMHVGH) match the 'HIGH' region motif.

This sequence belongs to the class-I aminoacyl-tRNA synthetase family. Monomer.

The protein resides in the cytoplasm. It carries out the reaction tRNA(Arg) + L-arginine + ATP = L-arginyl-tRNA(Arg) + AMP + diphosphate. In Neisseria meningitidis serogroup B (strain ATCC BAA-335 / MC58), this protein is Arginine--tRNA ligase.